Consider the following 179-residue polypeptide: PP2C-like domain-containing protein R307 (179 aa).

A PPM-type phosphatase domain is found at 1–176; it reads MNESKRENIQ…DNVSVIIIFF (176 aa).

Its subcellular location is the virion. This chain is PP2C-like domain-containing protein R307, found in Acanthamoeba polyphaga mimivirus (APMV).